The sequence spans 156 residues: Small ribosomal subunit protein uS7 (156 aa).

This sequence belongs to the universal ribosomal protein uS7 family. As to quaternary structure, part of the 30S ribosomal subunit. Contacts proteins S9 and S11.

Its function is as follows. One of the primary rRNA binding proteins, it binds directly to 16S rRNA where it nucleates assembly of the head domain of the 30S subunit. Is located at the subunit interface close to the decoding center, probably blocks exit of the E-site tRNA. The protein is Small ribosomal subunit protein uS7 of Aeromonas salmonicida (strain A449).